The following is a 113-amino-acid chain: Probable 4-amino-4-deoxy-L-arabinose-phosphoundecaprenol flippase subunit ArnE (113 aa).

3 helical membrane-spanning segments follow: residues 37 to 57 (SALK…LFWL), 62 to 82 (ILPL…VTLA), and 91 to 111 (AGIK…LMSL). The region spanning 45-111 (AVILLAVGML…IMLGILLMSL (67 aa)) is the EamA domain.

Belongs to the ArnE family. As to quaternary structure, heterodimer of ArnE and ArnF.

It localises to the cell inner membrane. Its pathway is bacterial outer membrane biogenesis; lipopolysaccharide biosynthesis. Functionally, translocates 4-amino-4-deoxy-L-arabinose-phosphoundecaprenol (alpha-L-Ara4N-phosphoundecaprenol) from the cytoplasmic to the periplasmic side of the inner membrane. The sequence is that of Probable 4-amino-4-deoxy-L-arabinose-phosphoundecaprenol flippase subunit ArnE from Photorhabdus laumondii subsp. laumondii (strain DSM 15139 / CIP 105565 / TT01) (Photorhabdus luminescens subsp. laumondii).